The chain runs to 295 residues: Ribosomal protein L11 methyltransferase (295 aa).

Residues Thr-145, Gly-166, Asp-188, and Asn-230 each coordinate S-adenosyl-L-methionine.

This sequence belongs to the methyltransferase superfamily. PrmA family.

It localises to the cytoplasm. It carries out the reaction L-lysyl-[protein] + 3 S-adenosyl-L-methionine = N(6),N(6),N(6)-trimethyl-L-lysyl-[protein] + 3 S-adenosyl-L-homocysteine + 3 H(+). Its function is as follows. Methylates ribosomal protein L11. The sequence is that of Ribosomal protein L11 methyltransferase from Shewanella amazonensis (strain ATCC BAA-1098 / SB2B).